The sequence spans 219 residues: Large ribosomal subunit protein bL31m (219 aa).

Composition is skewed to basic and acidic residues over residues 169-181 (KKEE…KAAE) and 210-219 (KETRHYGKKK). Disordered regions lie at residues 169–188 (KKEE…ADPF) and 200–219 (TENM…GKKK).

It belongs to the bacterial ribosomal protein bL31 family. Highly divergent. Component of the mitochondrial large ribosomal subunit (mt-LSU). Mature N.crassa 74S mitochondrial ribosomes consist of a small (37S) and a large (54S) subunit. The 37S small subunit contains a 16S ribosomal RNA (16S mt-rRNA) and 32 different proteins. The 54S large subunit contains a 23S rRNA (23S mt-rRNA) and 42 different proteins. bL31m bridges the mt-LSU central protuberance and the mt-SSU head.

The protein resides in the mitochondrion. In terms of biological role, component of the mitochondrial ribosome (mitoribosome), a dedicated translation machinery responsible for the synthesis of mitochondrial genome-encoded proteins, including at least some of the essential transmembrane subunits of the mitochondrial respiratory chain. The mitoribosomes are attached to the mitochondrial inner membrane and translation products are cotranslationally integrated into the membrane. In Neurospora crassa (strain ATCC 24698 / 74-OR23-1A / CBS 708.71 / DSM 1257 / FGSC 987), this protein is Large ribosomal subunit protein bL31m (mrpl36).